A 246-amino-acid polypeptide reads, in one-letter code: MPTYRDQAVVLRTHKLGEADRIVSMLSREHGKIRAVARGIRRTSSKFGARLDPFNLVDLQLVQGRNLDVVAQVECLHPYSAPLRQDYSLFTAAEVMVEAADHLVPVDREPAPAQYRLLAGALRVLGQGTTDGPRPPEMVLDSYLLRSLSASGYAPDLVDCVRCGTPGPHQGFSPSLGGVVCINCQPPGTPHPHEETISYLRALLVGDWTATRDVAWSRVREGSGLVAAFVSWHMDRGLRSMPLLER.

Belongs to the RecO family.

Involved in DNA repair and RecF pathway recombination. This is DNA repair protein RecO from Cutibacterium acnes (strain DSM 16379 / KPA171202) (Propionibacterium acnes).